Consider the following 286-residue polypeptide: Octanoyltransferase (286 aa).

Residues 50 to 278 (LRTPDELWIV…NIAQRHAGVI (229 aa)) form the BPL/LPL catalytic domain. Residues 89–96 (RGGQVTWH), 190–192 (SLG), and 203–205 (GVA) each bind substrate. Cys221 serves as the catalytic Acyl-thioester intermediate.

This sequence belongs to the LipB family.

Its subcellular location is the cytoplasm. It catalyses the reaction octanoyl-[ACP] + L-lysyl-[protein] = N(6)-octanoyl-L-lysyl-[protein] + holo-[ACP] + H(+). It functions in the pathway protein modification; protein lipoylation via endogenous pathway; protein N(6)-(lipoyl)lysine from octanoyl-[acyl-carrier-protein]: step 1/2. Functionally, catalyzes the transfer of endogenously produced octanoic acid from octanoyl-acyl-carrier-protein onto the lipoyl domains of lipoate-dependent enzymes. Lipoyl-ACP can also act as a substrate although octanoyl-ACP is likely to be the physiological substrate. In Psychrobacter arcticus (strain DSM 17307 / VKM B-2377 / 273-4), this protein is Octanoyltransferase.